A 332-amino-acid chain; its full sequence is Anthranilate phosphoribosyltransferase (332 aa).

5-phospho-alpha-D-ribose 1-diphosphate is bound by residues Gly-80, 83-84 (GD), Thr-88, 90-93 (NLST), 108-116 (KHGNRSASG), and Ser-120. An anthranilate-binding site is contributed by Gly-80. Ser-92 is a binding site for Mg(2+). Position 111 (Asn-111) interacts with anthranilate. Residue Arg-166 coordinates anthranilate. Mg(2+)-binding residues include Asp-224 and Glu-225.

The protein belongs to the anthranilate phosphoribosyltransferase family. As to quaternary structure, homodimer. Mg(2+) serves as cofactor.

The enzyme catalyses N-(5-phospho-beta-D-ribosyl)anthranilate + diphosphate = 5-phospho-alpha-D-ribose 1-diphosphate + anthranilate. The protein operates within amino-acid biosynthesis; L-tryptophan biosynthesis; L-tryptophan from chorismate: step 2/5. Functionally, catalyzes the transfer of the phosphoribosyl group of 5-phosphorylribose-1-pyrophosphate (PRPP) to anthranilate to yield N-(5'-phosphoribosyl)-anthranilate (PRA). The polypeptide is Anthranilate phosphoribosyltransferase (Pyrobaculum calidifontis (strain DSM 21063 / JCM 11548 / VA1)).